The chain runs to 387 residues: Probable peptidoglycan glycosyltransferase FtsW (387 aa).

Transmembrane regions (helical) follow at residues 20-40 (LYLL…VGSA), 61-81 (LFLL…LAFW), 86-106 (PVML…GIGV), 149-169 (TIRG…LLLL), 172-192 (DFGA…LGGA), 194-214 (LWHF…LAWY), 284-304 (LMGS…VLLI), 322-342 (GLGI…MGVL), and 349-369 (LPLM…VALI).

This sequence belongs to the SEDS family. FtsW subfamily.

Its subcellular location is the cell inner membrane. It carries out the reaction [GlcNAc-(1-&gt;4)-Mur2Ac(oyl-L-Ala-gamma-D-Glu-L-Lys-D-Ala-D-Ala)](n)-di-trans,octa-cis-undecaprenyl diphosphate + beta-D-GlcNAc-(1-&gt;4)-Mur2Ac(oyl-L-Ala-gamma-D-Glu-L-Lys-D-Ala-D-Ala)-di-trans,octa-cis-undecaprenyl diphosphate = [GlcNAc-(1-&gt;4)-Mur2Ac(oyl-L-Ala-gamma-D-Glu-L-Lys-D-Ala-D-Ala)](n+1)-di-trans,octa-cis-undecaprenyl diphosphate + di-trans,octa-cis-undecaprenyl diphosphate + H(+). The protein operates within cell wall biogenesis; peptidoglycan biosynthesis. Functionally, peptidoglycan polymerase that is essential for cell division. This Nitrosococcus halophilus (strain Nc4) protein is Probable peptidoglycan glycosyltransferase FtsW.